The primary structure comprises 366 residues: uncharacterized protein (366 aa).

The tract at residues 1–135 (MNQTGRTIGG…PPKNVDTIDK (135 aa)) is disordered. Residues 26–38 (PSEDRVSSRDETP) show a composition bias toward basic and acidic residues. The residue at position 69 (Ser-69) is a Phosphoserine. At Thr-76 the chain carries Phosphothreonine. Residue Lys-78 forms a Glycyl lysine isopeptide (Lys-Gly) (interchain with G-Cter in ubiquitin) linkage. Residues 97 to 108 (QHNHHHHRRTSH) are compositionally biased toward basic residues. Lys-187 is covalently cross-linked (Glycyl lysine isopeptide (Lys-Gly) (interchain with G-Cter in ubiquitin)). Residue Thr-189 is modified to Phosphothreonine. Lys-242 participates in a covalent cross-link: Glycyl lysine isopeptide (Lys-Gly) (interchain with G-Cter in ubiquitin). Residues Ser-288 and Ser-294 each carry the phosphoserine modification. The interval 313-366 (THSGHLEQKDVDDNRTSVPVTATQGSGHEDVVKKENTGNKLLRRVKSLKTSKKH) is disordered. The segment covering 316 to 327 (GHLEQKDVDDNR) has biased composition (basic and acidic residues). Residues 328–338 (TSVPVTATQGS) are compositionally biased toward polar residues. Residues 339–349 (GHEDVVKKENT) show a composition bias toward basic and acidic residues. A compositionally biased stretch (basic residues) spans 353 to 366 (LLRRVKSLKTSKKH). Ser-359 carries the phosphoserine modification.

The protein belongs to the pal1 family.

Its subcellular location is the cytoplasm. It is found in the nucleus. This is an uncharacterized protein from Saccharomyces cerevisiae (strain ATCC 204508 / S288c) (Baker's yeast).